Here is a 467-residue protein sequence, read N- to C-terminus: Prenyltransferase GME11375 (467 aa).

An L-tryptophan-binding site is contributed by glutamate 93. The dimethylallyl diphosphate site is built by arginine 108, lysine 196, tyrosine 198, lysine 266, tyrosine 268, and tyrosine 436.

This sequence belongs to the tryptophan dimethylallyltransferase family.

Its pathway is secondary metabolite biosynthesis. In terms of biological role, prenyltransferase; part of the gene cluster that mediates the biosynthesis of dibenzodioxocinones such as pestalotiollide B, a novel class of inhibitors against cholesterol ester transfer protein (CEPT). The biosynthesis initiates from condensation of acetate and malonate units catalyzed by the non-reducing PKS pks8/GME11356. Pks8/GME11356 lacks a thioesterase (TE) domain, which is important to the cyclizing of the third ring of atrochrysone carboxylic acid, and the esterase GME11355 might play the role of TE and catalyzes the cyclization reaction of the C ring. The lactamase-like protein GME11357 (or other beta-lactamases in Pestalotiopsis microspora) probably hydrolyzes the thioester bond between the ACP of pks8/GME11356 and the intermediate to release atrochrysone carboxylic acid, which is spontaneously dehydrates to form endocrocin anthrone. Endocrocin anthrone is further converted to emodin via the endocrocin intermediate. Emodin is then oxidized by several enzymes such as the Baeyer-Villiger oxidase GME11358, the oxidoreductase GME11367, the short chain dehydrogenase/reductase GME11373, as well as by other oxidoreductases from the cluster, to modify the A and C rings and open the B ring, and finally yield monodictyphenone. The prenyltransferase GME11375 may catalyze the addition reaction between the C5 side chains and the carbon bone of dibenzodioxocinones. The remaining biochemical reactions to the final product dibenzodioxocinones should be methylation catalyzed by methyltransferase GME11366 and reduction and lactonization reaction catalyzed by a series of oxidordeuctases. This chain is Prenyltransferase GME11375, found in Pestalotiopsis microspora.